The primary structure comprises 223 residues: DNA mismatch repair protein MutH (223 aa).

The protein belongs to the MutH family.

It is found in the cytoplasm. Functionally, sequence-specific endonuclease that cleaves unmethylated GATC sequences. It is involved in DNA mismatch repair. The sequence is that of DNA mismatch repair protein MutH from Shewanella baltica (strain OS195).